A 1134-amino-acid chain; its full sequence is Protocadherin-18 (1134 aa).

An N-terminal signal peptide occupies residues 1–27 (MYQMNAKMHFTFVFALLVVSFNLDVLG). Cadherin domains lie at 28–137 (KNLK…SPQF), 138–246 (SRSL…SPAF), 247–354 (EQQS…KPEI), 361–465 (PGKE…PPHF), 466–576 (QRSR…VPVV), and 582–697 (RNNT…APLD). The Extracellular portion of the chain corresponds to 28 to 699 (KNLKYRIYEE…SVSQAPLDVS (672 aa)). An N-linked (GlcNAc...) asparagine glycan is attached at N103. The N-linked (GlcNAc...) asparagine glycan is linked to N269. N-linked (GlcNAc...) asparagine glycosylation is present at N559. Residues 700–720 (MIIIISLGAICAVLLVIMVLF) form a helical membrane-spanning segment. The Cytoplasmic portion of the chain corresponds to 721–1134 (ATRCNREKKD…NKLLQDVRQS (414 aa)). Disordered stretches follow at residues 768–800 (TLPI…NSHQ), 868–888 (SLKD…DLGR), and 941–1003 (DYRS…TSSL). Polar residues predominate over residues 791–800 (GSRQSHNSHQ). Residues 868–877 (SLKDSGRGDS) show a composition bias toward basic and acidic residues. The tract at residues 892–1134 (IDRLLGEGFS…NKLLQDVRQS (243 aa)) is interaction with DAB1.

Interacts with DAB1.

The protein localises to the cell membrane. In terms of biological role, potential calcium-dependent cell-adhesion protein. The chain is Protocadherin-18 (PCDH18) from Bos taurus (Bovine).